The primary structure comprises 495 residues: MAVNVRDYIAENYGLFINGEFVKGSSDETIEVTNPATGETLSHITRAKDKDVDHAVKVAQEAFESWSLTSKSERAQMLRDIGDKLMAQKDKIAMIETLNNGKPIRETTAIDIPFAARHFHYFASVIETEEGTVNDIDKDTMSIVRHEPIGVVGAVVAWNFPMLLAAWKIAPAIAAGNTIVIQPSSSTPLSLLEVAKIFQEVLPKGVVNILTGKGSESGNAIFNHDGVDKLSFTGSTDVGYQVAEAAAKHLVPATLELGGKSANIILDDANLDLAVEGIQLGILFNQGEVCSAGSRLLVHEKIYDQLVPRLQEAFSNIKVGDPQDEATQMGSQTGKDQLDKIQSYIDAAKESDAQILAGGHRLTENGLDKGFFFEPTLIAVPDNHHKLAQEEIFGPVLTVIKVKDDQEAIDIANDSEYGLAGGVFSQNITRALNIAKAVRTGRIWINTYNQVPEGAPFGGYKKSGIGRETYKGALSNYQQVKNIYIDTSNALKGLY.

212–218 (GKGSESG) serves as a coordination point for NAD(+). Residues Glu-256 and Cys-290 contribute to the active site.

Belongs to the aldehyde dehydrogenase family.

The catalysed reaction is an aldehyde + NAD(+) + H2O = a carboxylate + NADH + 2 H(+). This Staphylococcus aureus (strain Mu50 / ATCC 700699) protein is Putative aldehyde dehydrogenase AldA (aldA).